Consider the following 470-residue polypeptide: Cysteine--tRNA ligase (470 aa).

Cysteine 28 contacts Zn(2+). Positions 30-40 match the 'HIGH' region motif; it reads PTVYNYIHIGN. 3 residues coordinate Zn(2+): cysteine 211, histidine 236, and glutamate 240. The short motif at 270 to 274 is the 'KMSKS' region element; it reads KMSKS. ATP is bound at residue lysine 273.

Belongs to the class-I aminoacyl-tRNA synthetase family. In terms of assembly, monomer. The cofactor is Zn(2+).

The protein localises to the cytoplasm. It catalyses the reaction tRNA(Cys) + L-cysteine + ATP = L-cysteinyl-tRNA(Cys) + AMP + diphosphate. This Enterococcus faecalis (strain ATCC 700802 / V583) protein is Cysteine--tRNA ligase.